The primary structure comprises 258 residues: MMNPLIIKLGGVLLDNEEALERLFTALVNYRESHQRPLVIVHGGGCVVDELMKGLNLPVKKKNGLRVTPADQIGIIAGALAGTANKTLLAWAKKHHIASVGLFLGDGDSVKVIQLDEALGHVGLAQPGSPKLINTLLENDFLPVVSSIGVTEDGQLMNVNADQAATALAATLGADLILLSDVSGILDGKGQRIAEMTAAKAEQLIDQGIITDGMIVKVNAALDAARALGRPVDIASWRHADQLPALFNGTPIGTRILA.

Substrate-binding positions include 44–45 (GG), arginine 66, and asparagine 158. Residues 181–186 (DVSGIL) and 209–211 (IIT) contribute to the ATP site.

Belongs to the acetylglutamate kinase family. ArgB subfamily. In terms of assembly, homodimer.

The protein resides in the cytoplasm. It catalyses the reaction N-acetyl-L-glutamate + ATP = N-acetyl-L-glutamyl 5-phosphate + ADP. The protein operates within amino-acid biosynthesis; L-arginine biosynthesis; N(2)-acetyl-L-ornithine from L-glutamate: step 2/4. Catalyzes the ATP-dependent phosphorylation of N-acetyl-L-glutamate. This chain is Acetylglutamate kinase, found in Salmonella arizonae (strain ATCC BAA-731 / CDC346-86 / RSK2980).